Reading from the N-terminus, the 319-residue chain is Protease HtpX homolog (319 aa).

2 helical membrane passes run 6–26 (TAML…VIGG) and 28–48 (GGMM…YWNS). Position 130 (His130) interacts with Zn(2+). The active site involves Glu131. His134 serves as a coordination point for Zn(2+). A run of 2 helical transmembrane segments spans residues 145 to 165 (LTAT…FFGG) and 172 to 192 (PLGF…AMLV). Position 201 (Glu201) interacts with Zn(2+). The segment at 279-319 (REMSAGSTAPARPDNAVRRSRSVPKTGWGRGGSEPPKGPWS) is disordered.

The protein belongs to the peptidase M48B family. Zn(2+) serves as cofactor.

It localises to the cell inner membrane. This Sinorhizobium fredii (strain NBRC 101917 / NGR234) protein is Protease HtpX homolog.